Here is a 219-residue protein sequence, read N- to C-terminus: Octanoyltransferase (219 aa).

A BPL/LPL catalytic domain is found at 34-209 (SESPDELWIV…TFSQLLGYQH (176 aa)). Substrate contacts are provided by residues 73–80 (RGGQVTYH), 140–142 (SLG), and 153–155 (GLA). Residue Cys171 is the Acyl-thioester intermediate of the active site.

It belongs to the LipB family.

Its subcellular location is the cytoplasm. The catalysed reaction is octanoyl-[ACP] + L-lysyl-[protein] = N(6)-octanoyl-L-lysyl-[protein] + holo-[ACP] + H(+). Its pathway is protein modification; protein lipoylation via endogenous pathway; protein N(6)-(lipoyl)lysine from octanoyl-[acyl-carrier-protein]: step 1/2. Its function is as follows. Catalyzes the transfer of endogenously produced octanoic acid from octanoyl-acyl-carrier-protein onto the lipoyl domains of lipoate-dependent enzymes. Lipoyl-ACP can also act as a substrate although octanoyl-ACP is likely to be the physiological substrate. The polypeptide is Octanoyltransferase (Shewanella putrefaciens (strain CN-32 / ATCC BAA-453)).